The chain runs to 137 residues: ATP synthase epsilon chain, sodium ion specific (137 aa).

It belongs to the ATPase epsilon chain family. In terms of assembly, F-type ATPases have 2 components, CF(1) - the catalytic core - and CF(0) - the membrane proton channel. CF(1) has five subunits: alpha(3), beta(3), gamma(1), delta(1), epsilon(1). CF(0) has three main subunits: a, b and c.

It is found in the cell inner membrane. Its function is as follows. Produces ATP from ADP in the presence of a sodium gradient across the membrane. The chain is ATP synthase epsilon chain, sodium ion specific (atpC) from Propionigenium modestum.